The chain runs to 349 residues: Twinfilin-2-B (349 aa).

2 ADF-H domains span residues 4 to 139 (QTGI…KHVS) and 177 to 313 (GLSF…DEVH). Positions 321–349 (QAFAKPKGPAGKRGQKRLIKGPGENGEDS) are disordered.

The protein belongs to the actin-binding proteins ADF family. Twinfilin subfamily. Interacts with G-actin; ADP-actin form and capping protein (CP).

Its subcellular location is the cytoplasm. The protein localises to the cytoskeleton. It is found in the perinuclear region. Functionally, actin-binding protein involved in motile and morphological processes. Inhibits actin polymerization, likely by sequestering G-actin. This Xenopus laevis (African clawed frog) protein is Twinfilin-2-B (twf2-b).